Here is a 946-residue protein sequence, read N- to C-terminus: DNA ligase 4 (946 aa).

9 residues coordinate ATP: E295, K297, R302, E355, F397, E457, K462, K479, and K481. K297 functions as the N6-AMP-lysine intermediate in the catalytic mechanism. Position 355 (E355) interacts with Mg(2+). E457 contacts Mg(2+). 2 consecutive BRCT domains span residues 688–787 (HRSD…PSHC) and 845–945 (VPHF…NYRL).

Belongs to the ATP-dependent DNA ligase family. Mg(2+) is required as a cofactor.

Its subcellular location is the nucleus. The catalysed reaction is ATP + (deoxyribonucleotide)n-3'-hydroxyl + 5'-phospho-(deoxyribonucleotide)m = (deoxyribonucleotide)n+m + AMP + diphosphate.. Functionally, DNA ligase involved in DNA non-homologous end joining (NHEJ); required for double-strand break (DSB) repair. This is DNA ligase 4 (LIG4) from Candida glabrata (strain ATCC 2001 / BCRC 20586 / JCM 3761 / NBRC 0622 / NRRL Y-65 / CBS 138) (Yeast).